A 353-amino-acid chain; its full sequence is UDP-N-acetylenolpyruvoylglucosamine reductase (353 aa).

One can recognise an FAD-binding PCMH-type domain in the interval 31-201; the sequence is LASHAPAFVA…GSVRFALPRP (171 aa). R177 is an active-site residue. S250 acts as the Proton donor in catalysis. E346 is an active-site residue.

Belongs to the MurB family. Requires FAD as cofactor.

The protein localises to the cytoplasm. The enzyme catalyses UDP-N-acetyl-alpha-D-muramate + NADP(+) = UDP-N-acetyl-3-O-(1-carboxyvinyl)-alpha-D-glucosamine + NADPH + H(+). Its pathway is cell wall biogenesis; peptidoglycan biosynthesis. Cell wall formation. The polypeptide is UDP-N-acetylenolpyruvoylglucosamine reductase (Bordetella parapertussis (strain 12822 / ATCC BAA-587 / NCTC 13253)).